Consider the following 304-residue polypeptide: Voltage-dependent anion channel-forming protein YneE (304 aa).

A run of 4 helical transmembrane segments spans residues 28–48 (LLLN…YTHL), 50–70 (IKFT…FLGF), 194–214 (VLAG…TLIL), and 220–240 (LFCI…TPFI).

This sequence belongs to the anion channel-forming bestrophin (TC 1.A.46) family.

It is found in the cell membrane. This is Voltage-dependent anion channel-forming protein YneE (yneE) from Escherichia coli O157:H7.